The following is a 932-amino-acid chain: Isoleucine--tRNA ligase (932 aa).

The short motif at 58–68 (PYANGDIHIGH) is the 'HIGH' region element. Position 559 (glutamate 559) interacts with L-isoleucyl-5'-AMP. Positions 600–604 (KMSKS) match the 'KMSKS' region motif. Position 603 (lysine 603) interacts with ATP. Cysteine 895, cysteine 898, cysteine 915, and cysteine 918 together coordinate Zn(2+).

Belongs to the class-I aminoacyl-tRNA synthetase family. IleS type 1 subfamily. In terms of assembly, monomer. It depends on Zn(2+) as a cofactor.

The protein resides in the cytoplasm. It carries out the reaction tRNA(Ile) + L-isoleucine + ATP = L-isoleucyl-tRNA(Ile) + AMP + diphosphate. Catalyzes the attachment of isoleucine to tRNA(Ile). As IleRS can inadvertently accommodate and process structurally similar amino acids such as valine, to avoid such errors it has two additional distinct tRNA(Ile)-dependent editing activities. One activity is designated as 'pretransfer' editing and involves the hydrolysis of activated Val-AMP. The other activity is designated 'posttransfer' editing and involves deacylation of mischarged Val-tRNA(Ile). This Saccharophagus degradans (strain 2-40 / ATCC 43961 / DSM 17024) protein is Isoleucine--tRNA ligase.